A 25-amino-acid chain; its full sequence is Unknown protein 4 (25 aa).

A compositionally biased stretch (basic and acidic residues) spans 1–10 (IEHNAEEIRK). The tract at residues 1–25 (IEHNAEEIRKTAIRTAVQNTAQQTK) is disordered. Over residues 16 to 25 (AVQNTAQQTK) the composition is skewed to polar residues.

The sequence is that of Unknown protein 4 from Lonomia obliqua (Moth).